The chain runs to 391 residues: uncharacterized protein (391 aa).

The protein belongs to the mycobacterial PPE family.

This is an uncharacterized protein from Mycobacterium tuberculosis (strain CDC 1551 / Oshkosh).